Here is a 273-residue protein sequence, read N- to C-terminus: NAD(P)H-hydrate epimerase (273 aa).

The 240-residue stretch at 18–257 (ALKLDEDLIN…LLAMEYDVQE (240 aa)) folds into the YjeF N-terminal domain. 71 to 75 (NNGGD) contacts (6S)-NADPHX. N72 and D146 together coordinate K(+). (6S)-NADPHX contacts are provided by residues 150 to 157 (GFSFHGGP), Y162, and D188. S191 contributes to the K(+) binding site.

This sequence belongs to the NnrE/AIBP family. Requires K(+) as cofactor.

It catalyses the reaction (6R)-NADHX = (6S)-NADHX. The catalysed reaction is (6R)-NADPHX = (6S)-NADPHX. Catalyzes the epimerization of the S- and R-forms of NAD(P)HX, a damaged form of NAD(P)H that is a result of enzymatic or heat-dependent hydration. This is a prerequisite for the S-specific NAD(P)H-hydrate dehydratase to allow the repair of both epimers of NAD(P)HX. This is NAD(P)H-hydrate epimerase from Giardia intestinalis (strain ATCC 50803 / WB clone C6) (Giardia lamblia).